The sequence spans 548 residues: Glutamyl-tRNA(Gln) amidotransferase subunit B, chloroplastic/mitochondrial (548 aa).

This sequence belongs to the GatB/GatE family. GatB subfamily. In terms of assembly, subunit of the heterotrimeric GatCAB amidotransferase (AdT) complex, composed of A, B and C subunits.

Its subcellular location is the mitochondrion. The protein resides in the plastid. It is found in the chloroplast. It carries out the reaction L-glutamyl-tRNA(Gln) + L-glutamine + ATP + H2O = L-glutaminyl-tRNA(Gln) + L-glutamate + ADP + phosphate + H(+). Its function is as follows. Allows the formation of correctly charged Gln-tRNA(Gln) through the transamidation of misacylated Glu-tRNA(Gln) in chloroplasts and mitochondria. The reaction takes place in the presence of glutamine and ATP through an activated gamma-phospho-Glu-tRNA(Gln). The chain is Glutamyl-tRNA(Gln) amidotransferase subunit B, chloroplastic/mitochondrial from Sorghum bicolor (Sorghum).